A 178-amino-acid chain; its full sequence is Ribosome maturation factor RimP (178 aa).

Belongs to the RimP family.

The protein localises to the cytoplasm. Functionally, required for maturation of 30S ribosomal subunits. The polypeptide is Ribosome maturation factor RimP (Streptococcus pyogenes serotype M4 (strain MGAS10750)).